The following is a 424-amino-acid chain: SNF1-related protein kinase regulatory subunit gamma-1 (424 aa).

Residue A2 is modified to N-acetylalanine. S44 bears the Phosphoserine mark. CBS domains are found at residues 63–131, 185–244, 263–324, and 350–408; these read LSSD…EPPS, TFRW…CAGL, MSKD…YHDY, and IMSG…SGYF.

This sequence belongs to the 5'-AMP-activated protein kinase gamma subunit family. Subunit of a probable heterotrimeric complex consisting of an alpha catalytic (KIN10 or KIN11) subunit, and a beta (KINB) and a gamma (KING or SNF4) non-catalytic regulatory subunits. Interacts with HXK1 in mitochondrion. In terms of processing, sumoylated by SIZ1. In terms of tissue distribution, expressed in vegetative organs and, to lower extent, in reproductive organs.

It localises to the mitochondrion. Functionally, regulatory subunit of the probable trimeric SNF1-related protein kinase (SnRK) complex, which may play a role in a signal transduction cascade regulating gene expression and carbohydrate metabolism in higher plants. The SnRK complex may also be involved in the regulation of fatty acid synthesis by phosphorylation of acetyl-CoA carboxylase and in assimilation of nitrogen by phosphorylating nitrate reductase. The chain is SNF1-related protein kinase regulatory subunit gamma-1 (KING1) from Arabidopsis thaliana (Mouse-ear cress).